The chain runs to 684 residues: Cleavage and polyadenylation specificity factor subunit 3 (684 aa).

Ser-2 bears the N-acetylserine mark. Residues His-71, His-73, Asp-75, His-76, His-158, and Asp-179 each coordinate Zn(2+). The active-site Proton donor is His-396. His-418 is a binding site for Zn(2+). Residues Lys-462, Lys-465, and Lys-545 each participate in a glycyl lysine isopeptide (Lys-Gly) (interchain with G-Cter in SUMO) cross-link. At Ser-659 the chain carries Phosphoserine. Thr-681 carries the post-translational modification Phosphothreonine.

Belongs to the metallo-beta-lactamase superfamily. RNA-metabolizing metallo-beta-lactamase-like family. CPSF3 subfamily. As to quaternary structure, component of the cleavage and polyadenylation specificity factor (CPSF) complex, composed of CPSF1, CPSF2, CPSF3, CPSF4 and FIP1L1. Interacts with CPSF2, CSTF2 and SYMPK. Interacts with TUT1; the interaction is direct and mediates the recruitment of the CPSF complex on the 3'UTR of pre-mRNAs. Interacts with WDR33. Interacts with ZC3H3. It depends on Zn(2+) as a cofactor. Post-translationally, sumoylated on Lys-462, Lys-465 and Lys-545, preferentially by SUMO3.

The protein resides in the nucleus. In terms of biological role, component of the cleavage and polyadenylation specificity factor (CPSF) complex that plays a key role in pre-mRNA 3'-end formation, recognizing the AAUAAA signal sequence and interacting with poly(A) polymerase and other factors to bring about cleavage and poly(A) addition. Has endonuclease activity, and functions as an mRNA 3'-end-processing endonuclease. Also involved in the histone 3'-end pre-mRNA processing. U7 snRNP-dependent protein that induces both the 3'-endoribonucleolytic cleavage of histone pre-mRNAs and acts as a 5' to 3' exonuclease for degrading the subsequent downstream cleavage product (DCP) of mature histone mRNAs. Cleavage occurs after the 5'-ACCCA-3' sequence in the histone pre-mRNA leaving a 3'hydroxyl group on the upstream fragment containing the stem loop (SL) and 5' phosphate on the downstream cleavage product (DCP) starting with CU nucleotides. The U7-dependent 5' to 3' exonuclease activity is processive and degrades the DCP RNA substrate even after complete removal of the U7-binding site. Binds to the downstream cleavage product (DCP) of histone pre-mRNAs and the cleaved DCP RNA substrate in a U7 snRNP dependent manner. Required for entering/progressing through S-phase of the cell cycle. Required for the selective processing of microRNAs (miRNAs) during embryonic stem cell differentiation via its interaction with ISY1. Required for the biogenesis of all miRNAs from the pri-miR-17-92 primary transcript except miR-92a. Only required for the biogenesis of miR-290 and miR-96 from the pri-miR-290-295 and pri-miR-96-183 primary transcripts, respectively. This is Cleavage and polyadenylation specificity factor subunit 3 (CPSF3) from Bos taurus (Bovine).